Consider the following 197-residue polypeptide: OV-16 antigen (197 aa).

An N-terminal signal peptide occupies residues 1–16; it reads MHCLQVVIAIVLYSFG. N-linked (GlcNAc...) asparagine glycosylation is found at Asn56, Asn61, Asn119, and Asn124.

This sequence belongs to the phosphatidylethanolamine-binding protein family. As to expression, hypodermis, cuticle and uterus.

The sequence is that of OV-16 antigen (OV16) from Onchocerca volvulus.